The following is a 571-amino-acid chain: MATLRVSSLFASSSSSLHSNPSVFTKYQSSPKWAFSFPVTPLCSKRSKRIVHCIAGDTLGLTRPNESDAPKISIGAKDTAVVQWQGDLLAIGATENDMARDENSKFKNPLLQQLDSELNGLLSAASSEEDFSGKSGQSVNLRFPGGRISLVGLGSSASSPTSYHSLGQAAAAAARSSQARNIAVALASTDGLSAESKINSASAIATGVVLGSFEDNRFRSESKKSTLESLDILGLGTGPEIERKIKYAEHVCAGVILGRELVNAPANIVTPAVLAEEAKKIASTYSDVISVNILDAEQCKELKMGAYLAVAAAATENPPYFIHLCFKTPTKERKTKLALVGKGLTFDSGGYNLKVGAGSRIELMKNDMGGAAAVLGAAKALGEIRPSRVEVHFIVAACENMISAEGMRPGDIVTASNGKTIEVNNTDAEGRLTLADALIYACNQGVEKIIDLATLTGAIMVALGPSVAGAFTPNDGLANEVVAAAEASGEKLWRMPMEESYWESMKSGVADMINLGPGNGGAITGALFLKQFVDEKVQWLHLDVAGPVWSDEKKNATGYGVSTLVEWVLRN.

The transit peptide at 1 to 42 (MATLRVSSLFASSSSSLHSNPSVFTKYQSSPKWAFSFPVTPL) directs the protein to the chloroplast. Residues Lys342 and Asp347 each contribute to the Mg(2+) site. Residue Lys354 is part of the active site. Residues Asp367, Asp427, and Glu429 each contribute to the Mg(2+) site. Residue Arg431 is part of the active site.

This sequence belongs to the peptidase M17 family. Homohexamer (dimer of homotrimers). Requires Mg(2+) as cofactor. Expressed during floral development. Expressed in healthy and senescent leaves, cotyledons (emergence from seed coats), pistils, sepals, petals, stamens, and floral buds (at protein level).

The protein localises to the plastid. It is found in the chloroplast. It catalyses the reaction Release of an N-terminal amino acid, Xaa-|-Yaa-, in which Xaa is preferably Leu, but may be other amino acids including Pro although not Arg or Lys, and Yaa may be Pro. Amino acid amides and methyl esters are also readily hydrolyzed, but rates on arylamides are exceedingly low.. It carries out the reaction Release of N-terminal proline from a peptide.. Catalyzes the removal of unsubstituted N-terminal amino acids from various peptides. When associated as homohexamer, catalyzes the proteolyzes of Xaa-Leu dipeptides. Possesses leucine aminopeptidase activity against the model substrate leucine-amido methyl coumarin. Presumably involved in the processing and regular turnover of intracellular proteins. Regulates wound signaling and has a role in insect defense. Functionally, functions as a molecular chaperone to protect proteins from heat-induced damage. This chain is Leucine aminopeptidase A2, chloroplastic, found in Solanum lycopersicum (Tomato).